Reading from the N-terminus, the 242-residue chain is Type III pantothenate kinase (242 aa).

6–13 serves as a coordination point for ATP; it reads DAGNTRIK. Residues Tyr90 and 97-100 contribute to the substrate site; that span reads GADR. Catalysis depends on Asp99, which acts as the Proton acceptor. Position 122 (Thr122) interacts with ATP. Thr172 is a binding site for substrate.

Belongs to the type III pantothenate kinase family. In terms of assembly, homodimer. NH4(+) is required as a cofactor. The cofactor is K(+).

The protein localises to the cytoplasm. It carries out the reaction (R)-pantothenate + ATP = (R)-4'-phosphopantothenate + ADP + H(+). The protein operates within cofactor biosynthesis; coenzyme A biosynthesis; CoA from (R)-pantothenate: step 1/5. Catalyzes the phosphorylation of pantothenate (Pan), the first step in CoA biosynthesis. The polypeptide is Type III pantothenate kinase (Aromatoleum aromaticum (strain DSM 19018 / LMG 30748 / EbN1) (Azoarcus sp. (strain EbN1))).